The sequence spans 289 residues: Four and a half LIM domains protein 3 (289 aa).

Residue serine 2 is modified to N-acetylserine. Residues cysteine 7–cysteine 31 form a C4-type zinc finger. LIM zinc-binding domains lie at cysteine 40–cysteine 92 and cysteine 101–cysteine 153. Position 157 is an N6-acetyllysine (lysine 157). 2 LIM zinc-binding domains span residues cysteine 162–cysteine 212 and cysteine 221–aspartate 275. Lysine 244 is subject to N6-acetyllysine.

As to quaternary structure, interacts with SOX15; the interaction recruits FHL3 to FOXK1 promoters where it acts as a transcriptional coactivator of FOXK1. As to expression, expressed in myogenic progenitor cells (at protein level). Expressed in skeletal striated muscle and the heart. Expressed to a lesser extent, in lung, and kidney. Expressed in skin and skeletal muscles such as the masseter, tongue, tibialis anterior and plantar muscles.

It is found in the nucleus. The protein localises to the cytoplasm. In terms of biological role, recruited by SOX15 to FOXK1 promoters where it acts as a transcriptional coactivator of FOXK1. The protein is Four and a half LIM domains protein 3 (Fhl3) of Mus musculus (Mouse).